A 265-amino-acid chain; its full sequence is Arcelin-1 (265 aa).

The N-terminal stretch at 1–21 is a signal peptide; sequence MASSNLLTLALFLVLLTHANS. Residues Asn33, Asn89, and Asn128 are each glycosylated (N-linked (GlcNAc...) asparagine). The cysteines at positions 165 and 201 are disulfide-linked.

The protein belongs to the leguminous lectin family. Homodimer.

In terms of biological role, seed storage. This carbohydrate-binding lectin has toxic effects on an important bean bruchid pest, Z.subfasciatus. Antibiosis properties of legume lectins are proposed to be due to the lysis of epithelial cells of the intestine by binding to the carbohydrate moieties of these proteins. The polypeptide is Arcelin-1 (ARC1) (Phaseolus vulgaris (Kidney bean)).